The following is a 224-amino-acid chain: Thiamine-phosphate synthase (224 aa).

Residues 41–45 (QFRDK) and Asp77 each bind 4-amino-2-methyl-5-(diphosphooxymethyl)pyrimidine. Positions 78 and 97 each coordinate Mg(2+). Ser116 is a binding site for 4-amino-2-methyl-5-(diphosphooxymethyl)pyrimidine. Position 143–145 (143–145 (TNS)) interacts with 2-[(2R,5Z)-2-carboxy-4-methylthiazol-5(2H)-ylidene]ethyl phosphate. Lys146 is a binding site for 4-amino-2-methyl-5-(diphosphooxymethyl)pyrimidine. 2-[(2R,5Z)-2-carboxy-4-methylthiazol-5(2H)-ylidene]ethyl phosphate is bound by residues Gly174 and 194-195 (IS).

Belongs to the thiamine-phosphate synthase family. Mg(2+) is required as a cofactor.

It carries out the reaction 2-[(2R,5Z)-2-carboxy-4-methylthiazol-5(2H)-ylidene]ethyl phosphate + 4-amino-2-methyl-5-(diphosphooxymethyl)pyrimidine + 2 H(+) = thiamine phosphate + CO2 + diphosphate. It catalyses the reaction 2-(2-carboxy-4-methylthiazol-5-yl)ethyl phosphate + 4-amino-2-methyl-5-(diphosphooxymethyl)pyrimidine + 2 H(+) = thiamine phosphate + CO2 + diphosphate. The catalysed reaction is 4-methyl-5-(2-phosphooxyethyl)-thiazole + 4-amino-2-methyl-5-(diphosphooxymethyl)pyrimidine + H(+) = thiamine phosphate + diphosphate. Its pathway is cofactor biosynthesis; thiamine diphosphate biosynthesis; thiamine phosphate from 4-amino-2-methyl-5-diphosphomethylpyrimidine and 4-methyl-5-(2-phosphoethyl)-thiazole: step 1/1. In terms of biological role, condenses 4-methyl-5-(beta-hydroxyethyl)thiazole monophosphate (THZ-P) and 2-methyl-4-amino-5-hydroxymethyl pyrimidine pyrophosphate (HMP-PP) to form thiamine monophosphate (TMP). This is Thiamine-phosphate synthase from Latilactobacillus sakei subsp. sakei (strain 23K) (Lactobacillus sakei subsp. sakei).